Consider the following 872-residue polypeptide: DNA mismatch repair protein MutS (872 aa).

Polar residues predominate over residues 1 to 17; sequence MSISKIESVNAEKQSPV. The segment at 1-22 is disordered; the sequence is MSISKIESVNAEKQSPVGTEIG. 632-639 contacts ATP; that stretch reads GPNMGGKS.

This sequence belongs to the DNA mismatch repair MutS family.

In terms of biological role, this protein is involved in the repair of mismatches in DNA. It is possible that it carries out the mismatch recognition step. This protein has a weak ATPase activity. The protein is DNA mismatch repair protein MutS of Azoarcus sp. (strain BH72).